A 321-amino-acid chain; its full sequence is Peroxidase 5 (321 aa).

The first 24 residues, 1–24 (MERFSLRFVLMMVSIILTSSICQA), serve as a signal peptide directing secretion. Gln25 carries the post-translational modification Pyrrolidone carboxylic acid. Disulfide bonds link Cys35–Cys115, Cys68–Cys73, Cys121–Cys317, and Cys201–Cys227. His66 acts as the Proton acceptor in catalysis. The Ca(2+) site is built by Asp67, Val70, Gly72, Asp74, and Ser76. Pro164 lines the substrate pocket. His194 lines the heme b pocket. Thr195 serves as a coordination point for Ca(2+). Residue Asn211 is glycosylated (N-linked (GlcNAc...) asparagine). Positions 240, 243, and 248 each coordinate Ca(2+). N-linked (GlcNAc...) asparagine glycosylation occurs at Asn285.

It belongs to the peroxidase family. Classical plant (class III) peroxidase subfamily. The cofactor is heme b. Ca(2+) serves as cofactor.

It is found in the secreted. The enzyme catalyses 2 a phenolic donor + H2O2 = 2 a phenolic radical donor + 2 H2O. In terms of biological role, removal of H(2)O(2), oxidation of toxic reductants, biosynthesis and degradation of lignin, suberization, auxin catabolism, response to environmental stresses such as wounding, pathogen attack and oxidative stress. These functions might be dependent on each isozyme/isoform in each plant tissue. The chain is Peroxidase 5 (PER5) from Arabidopsis thaliana (Mouse-ear cress).